Consider the following 240-residue polypeptide: Enoyl-CoA delta isomerase 2, peroxisomal (240 aa).

The Microbody targeting signal signature appears at Pro-238 to Leu-240.

This sequence belongs to the enoyl-CoA hydratase/isomerase family.

It is found in the peroxisome. The enzyme catalyses a (3Z)-enoyl-CoA = a 4-saturated (2E)-enoyl-CoA. The catalysed reaction is a (3E)-enoyl-CoA = a 4-saturated (2E)-enoyl-CoA. It participates in lipid metabolism; fatty acid beta-oxidation. Able to isomerize both 3-cis and 3-trans double bonds into the 2-trans form in a range of enoyl-CoA species. Essential for the beta oxidation of unsaturated fatty acids. Involved with IBR1 and IBR3 in the peroxisomal beta-oxidation of indole-3-butyric acid (IBA) to form indole-3-acetic acid (IAA), a biologically active auxin. This chain is Enoyl-CoA delta isomerase 2, peroxisomal, found in Arabidopsis thaliana (Mouse-ear cress).